A 488-amino-acid polypeptide reads, in one-letter code: MMLKSVTESFAGMIHGLKVNHLTDGIIRRSKRMILDSLGVGFLGTGTEVFHKVTQYSKIYSSNTSSTVWGRPDFRLPPTYAAFVNGVAVHSMDFDDTWHPATHPSGAVLPVLTALSEALPQIPKFSGLDLLLAFNVGIEVQGRLMHFSKEAKDIPKRFHPPSVVGTLGSAAAASKFLGLSLTKCREALAIAVSHAGAPIANAATQTKPLHIGNAAKHGMEATFLAMLGLQGNKQILDLGSGFGAFYANYSPEDLPSLDSHIWLLDQQDVAFKSFPAHLATHWVADAAAAVRKHLVTPERALFPADHIERIVLRIPDVQYVNRPFPDSEHEARHSFQYVACASLLDGSITVPSFHSQQVNRPQVRELLKKVKLEHPPDNPPSFDTLYCEISITLKDGTTFTERSDTFYGHWRKPLSQEDLRNKFRANASKMLCRDTVESLITVVEKLEDLEDCSVLTRLLKGPSVQDEASKLSSMSSFDHTTLPRFTNI.

Belongs to the PrpD family. As to quaternary structure, homodimer. As to expression, expressed in LPS-tolerized macrophages (at protein level). Expressed in the luminal epithelial cells of pregnant uterus. Expressed in microglia and macrophage cells.

Its subcellular location is the mitochondrion. It carries out the reaction cis-aconitate + H(+) = itaconate + CO2. Functionally, cis-aconitate decarboxylase that catalyzes production of itaconate and is involved in the inhibition of the inflammatory response. Acts as a negative regulator of the Toll-like receptors (TLRs)-mediated inflammatory innate response by stimulating the tumor necrosis factor alpha-induced protein TNFAIP3 expression via reactive oxygen species (ROS) in LPS-tolerized macrophages. Involved in antimicrobial response of innate immune cells; ACOD1-mediated itaconic acid production contributes to the antimicrobial activity of macrophages by generating itaconate, leading to alkylation of proteins, such as TFEB. Involved in antiviral response following infection by flavivirus in neurons: ACOD1-mediated itaconate production inhibits the activity of succinate dehydrogenase, generating a metabolic state in neurons that suppresses replication of viral genomes. Plays a role in the embryo implantation. This is Cis-aconitate decarboxylase from Mus musculus (Mouse).